Here is a 283-residue protein sequence, read N- to C-terminus: Probable aquaporin NIP4-2 (283 aa).

N-acetylmethionine is present on M1. Basic and acidic residues predominate over residues 1 to 21 (MTSHGEEIEDEQISRIEKGNC). Residues 1-23 (MTSHGEEIEDEQISRIEKGNCKD) form a disordered region. The next 2 helical transmembrane spans lie at 51–71 (GTYF…LYGG) and 77–97 (GICV…GHIS). The NPA 1 signature appears at 102–104 (NPA). 3 consecutive transmembrane segments (helical) span residues 120–140 (VPLY…TLRL), 161–181 (ALVA…GVAT), and 189–209 (LAGI…GPIS). The NPA 2 motif lies at 214 to 216 (NPA). A helical transmembrane segment spans residues 231–251 (IWVYIVGPFVGIFAGGFVYNF). Position 267 is a phosphoserine (S267).

This sequence belongs to the MIP/aquaporin (TC 1.A.8) family. NIP (TC 1.A.8.12) subfamily.

Its subcellular location is the membrane. In terms of biological role, aquaporins facilitate the transport of water and small neutral solutes across cell membranes. This chain is Probable aquaporin NIP4-2 (NIP4-2), found in Arabidopsis thaliana (Mouse-ear cress).